Here is a 457-residue protein sequence, read N- to C-terminus: ATP synthase subunit beta (457 aa).

150-157 lines the ATP pocket; it reads GGAGVGKT.

The protein belongs to the ATPase alpha/beta chains family. As to quaternary structure, F-type ATPases have 2 components, CF(1) - the catalytic core - and CF(0) - the membrane proton channel. CF(1) has five subunits: alpha(3), beta(3), gamma(1), delta(1), epsilon(1). CF(0) has three main subunits: a(1), b(2) and c(9-12). The alpha and beta chains form an alternating ring which encloses part of the gamma chain. CF(1) is attached to CF(0) by a central stalk formed by the gamma and epsilon chains, while a peripheral stalk is formed by the delta and b chains.

Its subcellular location is the cell membrane. The enzyme catalyses ATP + H2O + 4 H(+)(in) = ADP + phosphate + 5 H(+)(out). Its function is as follows. Produces ATP from ADP in the presence of a proton gradient across the membrane. The catalytic sites are hosted primarily by the beta subunits. This chain is ATP synthase subunit beta, found in Baumannia cicadellinicola subsp. Homalodisca coagulata.